A 305-amino-acid polypeptide reads, in one-letter code: UDP-3-O-acyl-N-acetylglucosamine deacetylase (305 aa).

Positions 79, 238, and 242 each coordinate Zn(2+). Catalysis depends on His265, which acts as the Proton donor.

This sequence belongs to the LpxC family. It depends on Zn(2+) as a cofactor.

The catalysed reaction is a UDP-3-O-[(3R)-3-hydroxyacyl]-N-acetyl-alpha-D-glucosamine + H2O = a UDP-3-O-[(3R)-3-hydroxyacyl]-alpha-D-glucosamine + acetate. Its pathway is glycolipid biosynthesis; lipid IV(A) biosynthesis; lipid IV(A) from (3R)-3-hydroxytetradecanoyl-[acyl-carrier-protein] and UDP-N-acetyl-alpha-D-glucosamine: step 2/6. Catalyzes the hydrolysis of UDP-3-O-myristoyl-N-acetylglucosamine to form UDP-3-O-myristoylglucosamine and acetate, the committed step in lipid A biosynthesis. The protein is UDP-3-O-acyl-N-acetylglucosamine deacetylase of Cronobacter sakazakii (strain ATCC BAA-894) (Enterobacter sakazakii).